Reading from the N-terminus, the 272-residue chain is Short-chain dehydrogenase reductase ATA1 (272 aa).

Residue 14–38 (IITGGARGIGAATARLFTENGAYVI) coordinates NADP(+). Residue Ser-143 participates in substrate binding. The Proton acceptor role is filled by Tyr-156. Residue Lys-160 coordinates NADP(+).

This sequence belongs to the short-chain dehydrogenases/reductases (SDR) family. Expressed specifically in tapetal cells.

Functionally, may play a role in tapetum development. This Arabidopsis thaliana (Mouse-ear cress) protein is Short-chain dehydrogenase reductase ATA1.